The sequence spans 463 residues: MSPPRKLHIKSYGCQMNVYDAQRMVDALAPEGFVETANVDDADLVILNTCHIREKASEKVYSELGRLRVARDEAANHGRRMQIAVAGCVAQAEGAEIIRRAPVVDVVVGPQSYHNLPQLLAKAEQHGRALETEFPIEDKFGVLPQPAPDAIRARGISAFVTVQEGCDKFCTFCVVPYTRGAEMSRPVAAIVEDVKRLAENGVREVTLIGQNVNAYHGDGPDRLAWSLGRLVRRLAEIPGIVRLRYSTSHPNDVNDDLLAAHRDLPALMPFVHLPVQSGSDRILAAMNRKHTADDYRRVIDRFRLASEAIAFSSDFIVGFPGETERDFSATLALVAQIGYAGAYSFKYSPRPGTPAADMAEMVPAAVMDERLEQLQQLIDQQQSAFNKAAIGRTVEVLFERAGRKPGQIVGRTAYLQPAHVMAPDSIIGKVLPVRVDSLERYSLLGELASATSRPADAMAATGA.

The region spanning 5-125 (RKLHIKSYGC…LPQLLAKAEQ (121 aa)) is the MTTase N-terminal domain. C14, C50, C88, C166, C170, and C173 together coordinate [4Fe-4S] cluster. Positions 152-384 (RARGISAFVT…QQLIDQQQSA (233 aa)) constitute a Radical SAM core domain. Residues 387–449 (KAAIGRTVEV…RYSLLGELAS (63 aa)) form the TRAM domain.

The protein belongs to the methylthiotransferase family. MiaB subfamily. In terms of assembly, monomer. [4Fe-4S] cluster serves as cofactor.

Its subcellular location is the cytoplasm. It catalyses the reaction N(6)-dimethylallyladenosine(37) in tRNA + (sulfur carrier)-SH + AH2 + 2 S-adenosyl-L-methionine = 2-methylsulfanyl-N(6)-dimethylallyladenosine(37) in tRNA + (sulfur carrier)-H + 5'-deoxyadenosine + L-methionine + A + S-adenosyl-L-homocysteine + 2 H(+). Its function is as follows. Catalyzes the methylthiolation of N6-(dimethylallyl)adenosine (i(6)A), leading to the formation of 2-methylthio-N6-(dimethylallyl)adenosine (ms(2)i(6)A) at position 37 in tRNAs that read codons beginning with uridine. The polypeptide is tRNA-2-methylthio-N(6)-dimethylallyladenosine synthase (Rhodopseudomonas palustris (strain ATCC BAA-98 / CGA009)).